The chain runs to 286 residues: 4-hydroxybenzoate octaprenyltransferase (286 aa).

Transmembrane regions (helical) follow at residues 21–40 (GTLL…AGGM), 95–115 (ILFV…NGLV), 142–162 (FLGI…TGEV), 167–187 (WWLF…YAMV), 210–230 (QIIG…GWSA), 235–255 (LYGL…MLIF), and 266–286 (FLNN…DYLI).

Belongs to the UbiA prenyltransferase family. Requires Mg(2+) as cofactor.

The protein localises to the cell inner membrane. The catalysed reaction is all-trans-octaprenyl diphosphate + 4-hydroxybenzoate = 4-hydroxy-3-(all-trans-octaprenyl)benzoate + diphosphate. Its pathway is cofactor biosynthesis; ubiquinone biosynthesis. Its function is as follows. Catalyzes the prenylation of para-hydroxybenzoate (PHB) with an all-trans polyprenyl group. Mediates the second step in the final reaction sequence of ubiquinone-8 (UQ-8) biosynthesis, which is the condensation of the polyisoprenoid side chain with PHB, generating the first membrane-bound Q intermediate 3-octaprenyl-4-hydroxybenzoate. In Shewanella baltica (strain OS155 / ATCC BAA-1091), this protein is 4-hydroxybenzoate octaprenyltransferase.